A 247-amino-acid chain; its full sequence is Carboxy-S-adenosyl-L-methionine synthase (247 aa).

S-adenosyl-L-methionine-binding positions include Y39, 64–66 (GCS), 89–90 (DN), 117–118 (DI), N132, and R199.

Belongs to the class I-like SAM-binding methyltransferase superfamily. Cx-SAM synthase family. Homodimer.

It catalyses the reaction prephenate + S-adenosyl-L-methionine = carboxy-S-adenosyl-L-methionine + 3-phenylpyruvate + H2O. Catalyzes the conversion of S-adenosyl-L-methionine (SAM) to carboxy-S-adenosyl-L-methionine (Cx-SAM). This chain is Carboxy-S-adenosyl-L-methionine synthase, found in Klebsiella pneumoniae subsp. pneumoniae (strain ATCC 700721 / MGH 78578).